A 301-amino-acid polypeptide reads, in one-letter code: Probable alpha-L-glutamate ligase (301 aa).

Residues 104 to 287 (LQLLSRKGVG…VAGRIVSFIE (184 aa)) enclose the ATP-grasp domain. ATP contacts are provided by residues Lys-141, 178 to 179 (EF), Asp-187, and 211 to 213 (RSN). Mg(2+) contacts are provided by Asp-248, Glu-260, and Asn-262. Residues Asp-248, Glu-260, and Asn-262 each contribute to the Mn(2+) site.

This sequence belongs to the RimK family. It depends on Mg(2+) as a cofactor. Mn(2+) is required as a cofactor.

The polypeptide is Probable alpha-L-glutamate ligase (Thioalkalivibrio sulfidiphilus (strain HL-EbGR7)).